The following is a 147-amino-acid chain: Putative cystatin-9-like protein CST9LP1 (147 aa).

A signal peptide spans 1–28; the sequence is MWSLPPSRALSCAPLLLLFSFQFLVTYA. A disulfide bridge connects residues cysteine 98 and cysteine 108. N-linked (GlcNAc...) asparagine glycans are attached at residues asparagine 117 and asparagine 139. Residues cysteine 122 and cysteine 142 are joined by a disulfide bond.

Belongs to the cystatin family.

It localises to the secreted. In Homo sapiens (Human), this protein is Putative cystatin-9-like protein CST9LP1 (CST9LP1).